A 698-amino-acid polypeptide reads, in one-letter code: Interleukin enhancer-binding factor 3 (698 aa).

Residues 5 to 379 (RIFLNDDRHV…ALKRPMEEDG (375 aa)) enclose the DZF domain. Disordered regions lie at residues 51–88 (QQEKDCSGEQEQPEPEEPETTEEGKDSEGKTGENPTRT), 374–403 (PMEEDGEDKSPSKKKKKIQKKDEKSEPPQA), and 473–522 (EEKE…KHGK). Over residues 61–71 (EQPEPEEPETT) the composition is skewed to acidic residues. 2 stretches are compositionally biased toward basic and acidic residues: residues 72–81 (EEGKDSEGKT) and 374–384 (PMEEDGEDKSP). The Bipartite nuclear localization signal motif lies at 372-390 (KRPMEEDGEDKSPSKKKKK). The 70-residue stretch at 399-468 (EPPQAMNALM…AVKVLQDMGL (70 aa)) folds into the DRBM 1 domain. Residues 490–503 (TPAQPADSTQTDSA) are compositionally biased toward polar residues. Residues 520 to 586 (HGKNPVMELN…ALAALEKLFP (67 aa)) form the DRBM 2 domain.

As to quaternary structure, a component of a ybx2/frgy2-containing mRNA-ribonucleoprotein (mRNP) complex. Also a component of the CCAAT box transcription factor (CBTF) complex. In terms of processing, phosphorylated. Phosphorylation affects nuclear translocation. Methylated by protein arginine N-methyltransferase 1 (prmt1b) in the RGG-rich domain. Methylation decreases DNA-binding and thereby decreases transcription of the gata2 gene, but does not regulate dsRNA binding or subcellular localization.

It is found in the nucleus. The protein resides in the cytoplasm. Its function is as follows. RNA-binding protein that plays an essential role in the biogenesis of circular RNAs (circRNAs) which are produced by back-splicing circularization of pre-mRNAs. Within the nucleus, promotes circRNAs processing by stabilizing the regulatory elements residing in the flanking introns of the circularized exons. Plays thereby a role in the back-splicing of a subset of circRNAs. As a consequence, participates in a wide range of transcriptional and post-transcriptional processes. Binds to poly-U elements and AU-rich elements (AREs) in the 3'-UTR of target mRNAs. Upon viral infection, ILF3 accumulates in the cytoplasm and participates in the innate antiviral response. Mechanistically, ILF3 becomes phosphorylated and activated by the double-stranded RNA-activated protein kinase/PKR which releases ILF3 from cellular mature circRNAs. In turn, unbound ILF3 molecules are able to interact with and thus inhibit viral mRNAs. Has a cytoplasmic role early in development as part of a ribonucleoprotein (mRNP) complex which may regulate mRNA transport and/or translation. Following nuclear localization at the mid-blastula transition, acts as a transcription factor and binds the 5'-CCAAT-3' promoter sequence to regulate transcription of the gata2 gene as a subunit of the CCAAT box transcription factor (CBTF). Its role as an mRNP component negatively regulates its activity as a transcription factor by precluding its nuclear localization. In Xenopus tropicalis (Western clawed frog), this protein is Interleukin enhancer-binding factor 3.